Consider the following 495-residue polypeptide: Pre-glycoprotein polyprotein GP complex (495 aa).

The N-myristoyl glycine; by host moiety is linked to residue G2. At 2-17 (GQFISFMQEIPIFLQE) the chain is on the extracellular side. A helical transmembrane segment spans residues 18 to 33 (ALNIALVAVSLICIVK). The Cytoplasmic portion of the chain corresponds to 34–58 (GLVNLYRCGLFQLMVFLVLAGRSCS). C57 provides a ligand contact to Zn(2+). Residues 59-434 (EETFKIGMHT…QGRTPITLVD (376 aa)) lie on the Extracellular side of the membrane. Cystine bridges form between C92-C236, C281-C294, C303-C312, and C366-C387. N-linked (GlcNAc...) asparagine; by host glycosylation is found at N95 and N188. N367, N375, N392, and N397 each carry an N-linked (GlcNAc...) asparagine; by host glycan. A helical membrane pass occupies residues 435–455 (ICFWSTVFFTSTLFLHLIGFP). Over 456–495 (THEHIRGEGCPLPHRLNSMGGCRCGKYLPLKKPTIWHRRH) the chain is Cytoplasmic. H457, H459, C465, H469, C477, C479, and H495 together coordinate Zn(2+).

This sequence belongs to the arenaviridae GPC protein family. In terms of assembly, interacts with glycoprotein G2. Part of the GP complex (GP-C) together with glycoprotein G1 and glycoprotein G2. The GP-complex interacts with protein Z, which interacts with ribonucleocapsid; these interactions may induce virion budding. As to quaternary structure, homotrimer; disulfide-linked. In pre-fusion state, G1 homotrimers bind G2 homotrimers via ionic interactions. Part of the GP complex (GP-C) together with glycoprotein G2 and the stable signal peptide. The GP-complex interacts with protein Z, which interacts with ribonucleocapsid; these interactions may induce virion budding. Homotrimer. Interacts with the stable signal peptide. In pre-fusion state, G2 homotrimers bind G1 homotrimers via ionic interactions. Part of the GP complex (GP-C) together with glycoprotein G1 and the stable signal peptide. Acidification in the endosome triggers rearrangements, which ultimately leads to a 6 helix bundle formed by the two heptad repeat domains (HR1 and HR2) in post-fusion state. The GP-complex interacts with protein Z, which interacts with ribonucleocapsid; these interactions may induce virion budding. Post-translationally, specific enzymatic cleavages in vivo yield mature proteins. GP-C polyprotein is cleaved in the endoplasmic reticulum by the host protease MBTPS1. Only cleaved glycoprotein is incorporated into virions. In terms of processing, the SSP remains stably associated with the GP complex following cleavage by signal peptidase and plays crucial roles in the trafficking of GP through the secretory pathway. Myristoylation is necessary for GP2-mediated fusion activity.

The protein localises to the virion membrane. It localises to the host endoplasmic reticulum membrane. Its subcellular location is the host Golgi apparatus membrane. The protein resides in the host cell membrane. Its function is as follows. Functions as a cleaved signal peptide that is retained as the third component of the GP complex (GP-C). Helps to stabilize the spike complex in its native conformation. The SSP is required for efficient glycoprotein expression, post-translational maturation cleavage of G1 and G2, glycoprotein transport to the cell surface plasma membrane, formation of infectious virus particles, and acid pH-dependent glycoprotein-mediated cell fusion. In terms of biological role, forms the virion spikes together with glycoprotein G2. The glycoprotein spike trimers are connected to the underlying matrix. Interacts with the host receptor leading to virus endocytosis. Forms the virion spikes together with glycoprotein G1. The glycoprotein spike trimers are connected to the underlying matrix. Class I viral fusion protein that directs fusion of viral and host endosomal membranes, leading to delivery of the nucleocapsid into the cytoplasm. Membrane fusion is mediated by irreversible conformational changes induced by acidification. The sequence is that of Pre-glycoprotein polyprotein GP complex from Tacaribe virus (strain Franze-Fernandez) (TCRV).